We begin with the raw amino-acid sequence, 217 residues long: Peroxiredoxin (217 aa).

The Thioredoxin domain occupies 2 to 159 (PVIGEKFPEV…IVRLVKALQV (158 aa)). The active-site Cysteine sulfenic acid (-SOH) intermediate is the Cys46. Arg122 is a substrate binding site. A disulfide bridge links Cys206 with Cys212.

It belongs to the peroxiredoxin family. Prx6 subfamily. In terms of assembly, homodecamer. Pentamer of dimers that assemble into a ring structure.

Its subcellular location is the cytoplasm. It carries out the reaction a hydroperoxide + [thioredoxin]-dithiol = an alcohol + [thioredoxin]-disulfide + H2O. Its function is as follows. Thiol-specific peroxidase that catalyzes the reduction of hydrogen peroxide and organic hydroperoxides to water and alcohols, respectively. Plays a role in cell protection against oxidative stress by detoxifying peroxides. The sequence is that of Peroxiredoxin from Methanocaldococcus jannaschii (strain ATCC 43067 / DSM 2661 / JAL-1 / JCM 10045 / NBRC 100440) (Methanococcus jannaschii).